A 518-amino-acid chain; its full sequence is GMP synthase [glutamine-hydrolyzing] (518 aa).

One can recognise a Glutamine amidotransferase type-1 domain in the interval 6 to 200 (RLLIIDFGSQ…FVRLAGFKGD (195 aa)). The active-site Nucleophile is Cys-84. Catalysis depends on residues His-175 and Glu-177. The GMPS ATP-PPase domain maps to 201-393 (WTMGAYREEA…LGLPESFIGR (193 aa)). 228-234 (SGGVDSS) is a binding site for ATP.

As to quaternary structure, homodimer.

The catalysed reaction is XMP + L-glutamine + ATP + H2O = GMP + L-glutamate + AMP + diphosphate + 2 H(+). It participates in purine metabolism; GMP biosynthesis; GMP from XMP (L-Gln route): step 1/1. In terms of biological role, catalyzes the synthesis of GMP from XMP. This is GMP synthase [glutamine-hydrolyzing] from Cereibacter sphaeroides (strain ATCC 17029 / ATH 2.4.9) (Rhodobacter sphaeroides).